Reading from the N-terminus, the 227-residue chain is NADH-quinone oxidoreductase subunit C (227 aa).

The protein belongs to the complex I 30 kDa subunit family. As to quaternary structure, NDH-1 is composed of 14 different subunits. Subunits NuoB, C, D, E, F, and G constitute the peripheral sector of the complex.

It localises to the cell inner membrane. It carries out the reaction a quinone + NADH + 5 H(+)(in) = a quinol + NAD(+) + 4 H(+)(out). Functionally, NDH-1 shuttles electrons from NADH, via FMN and iron-sulfur (Fe-S) centers, to quinones in the respiratory chain. The immediate electron acceptor for the enzyme in this species is believed to be ubiquinone. Couples the redox reaction to proton translocation (for every two electrons transferred, four hydrogen ions are translocated across the cytoplasmic membrane), and thus conserves the redox energy in a proton gradient. This chain is NADH-quinone oxidoreductase subunit C, found in Legionella pneumophila subsp. pneumophila (strain Philadelphia 1 / ATCC 33152 / DSM 7513).